The chain runs to 488 residues: Ribulose bisphosphate carboxylase large chain (488 aa).

Residues Asn127 and Thr177 each coordinate substrate. The Proton acceptor role is filled by Lys179. Lys181 is a substrate binding site. Lys205, Asp207, and Glu208 together coordinate Mg(2+). Lys205 carries the post-translational modification N6-carboxylysine. His297 (proton acceptor) is an active-site residue. 3 residues coordinate substrate: Arg298, His330, and Ser382.

It belongs to the RuBisCO large chain family. Type I subfamily. As to quaternary structure, heterohexadecamer of 8 large chains and 8 small chains. It depends on Mg(2+) as a cofactor.

It localises to the plastid. The protein resides in the chloroplast. The enzyme catalyses 2 (2R)-3-phosphoglycerate + 2 H(+) = D-ribulose 1,5-bisphosphate + CO2 + H2O. It carries out the reaction D-ribulose 1,5-bisphosphate + O2 = 2-phosphoglycolate + (2R)-3-phosphoglycerate + 2 H(+). RuBisCO catalyzes two reactions: the carboxylation of D-ribulose 1,5-bisphosphate, the primary event in carbon dioxide fixation, as well as the oxidative fragmentation of the pentose substrate in the photorespiration process. Both reactions occur simultaneously and in competition at the same active site. The sequence is that of Ribulose bisphosphate carboxylase large chain from Rhodomonas salina (Cryptomonas salina).